A 125-amino-acid polypeptide reads, in one-letter code: UPF0231 protein APL_0968 (125 aa).

The protein belongs to the UPF0231 family.

This is UPF0231 protein APL_0968 from Actinobacillus pleuropneumoniae serotype 5b (strain L20).